We begin with the raw amino-acid sequence, 294 residues long: N-acetylmuramic acid 6-phosphate etherase (294 aa).

In terms of domain architecture, SIS spans 54-217 (VIQSFEEEGR…STASMIGVGK (164 aa)). Glutamate 82 serves as the catalytic Proton donor. Glutamate 113 is a catalytic residue.

The protein belongs to the GCKR-like family. MurNAc-6-P etherase subfamily. As to quaternary structure, homodimer.

It catalyses the reaction N-acetyl-D-muramate 6-phosphate + H2O = N-acetyl-D-glucosamine 6-phosphate + (R)-lactate. Its pathway is amino-sugar metabolism; N-acetylmuramate degradation. Specifically catalyzes the cleavage of the D-lactyl ether substituent of MurNAc 6-phosphate, producing GlcNAc 6-phosphate and D-lactate. In Bacillus thuringiensis subsp. konkukian (strain 97-27), this protein is N-acetylmuramic acid 6-phosphate etherase.